Consider the following 338-residue polypeptide: Methionine synthase (338 aa).

Zn(2+) is bound by residues H210, C212, E234, and C294.

The protein belongs to the archaeal MetE family. Zn(2+) is required as a cofactor.

It participates in amino-acid biosynthesis; L-methionine biosynthesis via de novo pathway. Catalyzes the transfer of a methyl group to L-homocysteine resulting in methionine formation. The physiological methyl donor is unknown. In Pyrococcus abyssi (strain GE5 / Orsay), this protein is Methionine synthase.